Reading from the N-terminus, the 472-residue chain is Na(+)/H(+) antiporter NhaA (472 aa).

A run of 10 helical transmembrane segments spans residues 24–44, 66–86, 108–128, 156–176, 196–216, 234–254, 290–310, 312–332, 361–381, and 392–412; these read ISGL…NLPA, LPIG…TVGL, LCAV…TALF, GWAV…ALFA, LLAI…YWFI, VPWI…FEAG, PFSA…VHFE, MSPL…LVVG, MIPA…IASL, and ARFG…VLLS. The tract at residues 422 to 472 is disordered; the sequence is AAAAAADEEDDESIDGDGIGQPSHTTEPTTPTEHPGTLADGTASVEIDFRH. The segment covering 427 to 436 has biased composition (acidic residues); the sequence is ADEEDDESID. Residues 445-456 are compositionally biased toward low complexity; sequence HTTEPTTPTEHP.

This sequence belongs to the NhaA Na(+)/H(+) (TC 2.A.33) antiporter family.

It localises to the cell membrane. The catalysed reaction is Na(+)(in) + 2 H(+)(out) = Na(+)(out) + 2 H(+)(in). Functionally, na(+)/H(+) antiporter that extrudes sodium in exchange for external protons. This Bifidobacterium longum (strain NCC 2705) protein is Na(+)/H(+) antiporter NhaA.